A 346-amino-acid polypeptide reads, in one-letter code: Ribulose-5-phosphate reductase (346 aa).

Residues Cys45, His71, Glu72, and Glu151 each contribute to the Zn(2+) site.

It belongs to the zinc-containing alcohol dehydrogenase family. It depends on Zn(2+) as a cofactor.

It catalyses the reaction D-ribitol 5-phosphate + NADP(+) = D-ribulose 5-phosphate + NADPH + H(+). Its pathway is cell wall biogenesis; poly(ribitol phosphate) teichoic acid biosynthesis. Functionally, catalyzes the NADPH dependent reduction of D-ribulose 5-phosphate to D-ribitol 5-phosphate. The polypeptide is Ribulose-5-phosphate reductase (Streptococcus pneumoniae (strain ATCC BAA-255 / R6)).